The primary structure comprises 532 residues: Flavin-containing monooxygenase 1 (532 aa).

Ala2 is subject to N-acetylalanine. Residues 2–510 are Lumenal-facing; that stretch reads AKRVAIVGAG…TRIVKESPSP (509 aa). FAD-binding positions include 9-13, Glu32, 40-41, and 61-62; these read GAGVS, LW, and NS. Residue 60–61 coordinates NADP(+); the sequence is SN. N-linked (GlcNAc...) (high mannose) asparagine glycosylation is present at Asn120. 195–198 lines the NADP(+) pocket; the sequence is SGTD. Residues 511–531 form a helical membrane-spanning segment; that stretch reads FASLLKLFSFLALLVAIFQIF. A topological domain (cytoplasmic) is located at residue Leu532.

This sequence belongs to the FMO family. Requires FAD as cofactor. As to expression, liver.

It is found in the endoplasmic reticulum membrane. The catalysed reaction is hypotaurine + NADPH + O2 + H(+) = taurine + NADP(+) + H2O. It catalyses the reaction hypotaurine + NADH + O2 + H(+) = taurine + NAD(+) + H2O. It carries out the reaction trimethylamine + NADPH + O2 = trimethylamine N-oxide + NADP(+) + H2O. The enzyme catalyses N,N-dimethylaniline + NADPH + O2 + H(+) = N,N-dimethylaniline N-oxide + NADP(+) + H2O. Its function is as follows. Broad spectrum monooxygenase that catalyzes the oxygenation of a wide variety of nitrogen- and sulfur-containing compounds including xenobiotics. Catalyzes the S-oxygenation of hypotaurine to produce taurine, an organic osmolyte involved in cell volume regulation as well as a variety of cytoprotective and developmental processes. In vitro, catalyzes the N-oxygenation of trimethylamine (TMA) to produce trimethylamine N-oxide (TMAO) and could therefore participate to the detoxification of this compound that is generated by the action of gut microbiota from dietary precursors such as choline, choline containing compounds, betaine or L-carnitine. The protein is Flavin-containing monooxygenase 1 (FMO1) of Sus scrofa (Pig).